The sequence spans 87 residues: Potassium channel toxin TsTXK-beta/Cryptide TyPep-16 (87 aa).

The N-terminal stretch at 1–19 (MERKLALLLILGMVTLASC) is a signal peptide. The 35-residue stretch at 53–87 (QFGCPAYEGYCNDHCNDIERKDGECHGFKCKCAKD) folds into the BetaSPN-type CS-alpha/beta domain. 3 cysteine pairs are disulfide-bonded: Cys56-Cys77, Cys63-Cys82, and Cys67-Cys84.

This sequence belongs to the long chain scorpion toxin family. Class 1 subfamily. As to expression, expressed by the venom gland.

It localises to the secreted. Functionally, specifically blocks voltage-gated potassium channels Kv4.2/KCND2. When measured at the peak current, the blocking effect of this toxin is about 65% and shows an IC(50)=652 nM. However, when measured at a later moment of the depolarising test pulse (500 ms), a 100% block of the current is observed with an IC(50)=313 nM. This may indicate a preference of the toxin for binding the inactivated state of the channel. The inhibition is completely reversible. In vivo, intraplantar injection into rat paw induces overt nociception (licking and lifting behaviors) and decreases the mechanical nociceptive threshold (hyperalgesia). Furthermore, the hyperalgesia is prolonged when intrathecal injections are performed. Induces discomfort and anxiety in mice, as it moderately diminishes locomotion (but has no effect on rearing behavior). Does not cause hemolysis, mast cell degranulation, LDH release, and does not have antimicrobial activity. Does not cause edema and pain. Its function is as follows. Does not induce hemolytic activity, lactate dehydrogenase (LDH) release from mast cells, mast cell degranulation, and antimicrobial effects. In vivo, injection into mice causes moderate edema formation, but induces very weak or no change in nociceptive sensibility. It also reduces mice locomotion, suggesting an increase in anxiety, but causes no alteration in rearing (standing on hind limbs). This chain is Potassium channel toxin TsTXK-beta/Cryptide TyPep-16, found in Tityus serrulatus (Brazilian scorpion).